Reading from the N-terminus, the 537-residue chain is Cytochrome P450 4F6 (537 aa).

C468 provides a ligand contact to heme.

This sequence belongs to the cytochrome P450 family. The cofactor is heme. In terms of tissue distribution, high expression in liver and kidney. Lower expression in brain.

The protein localises to the endoplasmic reticulum membrane. It localises to the microsome membrane. It carries out the reaction an organic molecule + reduced [NADPH--hemoprotein reductase] + O2 = an alcohol + oxidized [NADPH--hemoprotein reductase] + H2O + H(+). This chain is Cytochrome P450 4F6 (Cyp4f6), found in Rattus norvegicus (Rat).